The chain runs to 258 residues: Thiazole synthase (258 aa).

The Schiff-base intermediate with DXP role is filled by K96. Residues G157, 183 to 184 (AG), and 205 to 206 (NT) each bind 1-deoxy-D-xylulose 5-phosphate.

This sequence belongs to the ThiG family. As to quaternary structure, homotetramer. Forms heterodimers with either ThiH or ThiS.

It localises to the cytoplasm. It carries out the reaction [ThiS sulfur-carrier protein]-C-terminal-Gly-aminoethanethioate + 2-iminoacetate + 1-deoxy-D-xylulose 5-phosphate = [ThiS sulfur-carrier protein]-C-terminal Gly-Gly + 2-[(2R,5Z)-2-carboxy-4-methylthiazol-5(2H)-ylidene]ethyl phosphate + 2 H2O + H(+). It participates in cofactor biosynthesis; thiamine diphosphate biosynthesis. In terms of biological role, catalyzes the rearrangement of 1-deoxy-D-xylulose 5-phosphate (DXP) to produce the thiazole phosphate moiety of thiamine. Sulfur is provided by the thiocarboxylate moiety of the carrier protein ThiS. In vitro, sulfur can be provided by H(2)S. In Alkaliphilus metalliredigens (strain QYMF), this protein is Thiazole synthase.